Consider the following 261-residue polypeptide: 1-(5-phosphoribosyl)-5-[(5-phosphoribosylamino)methylideneamino] imidazole-4-carboxamide isomerase (261 aa).

Aspartate 15 acts as the Proton acceptor in catalysis. The Proton donor role is filled by aspartate 136.

The protein belongs to the HisA/HisF family.

The protein localises to the cytoplasm. The enzyme catalyses 1-(5-phospho-beta-D-ribosyl)-5-[(5-phospho-beta-D-ribosylamino)methylideneamino]imidazole-4-carboxamide = 5-[(5-phospho-1-deoxy-D-ribulos-1-ylimino)methylamino]-1-(5-phospho-beta-D-ribosyl)imidazole-4-carboxamide. Its pathway is amino-acid biosynthesis; L-histidine biosynthesis; L-histidine from 5-phospho-alpha-D-ribose 1-diphosphate: step 4/9. This Synechococcus sp. (strain JA-3-3Ab) (Cyanobacteria bacterium Yellowstone A-Prime) protein is 1-(5-phosphoribosyl)-5-[(5-phosphoribosylamino)methylideneamino] imidazole-4-carboxamide isomerase.